The chain runs to 366 residues: 3-isopropylmalate dehydrogenase (366 aa).

77 to 90 (GPKWDDNPPHLRPE) is a binding site for NAD(+). Residues R97, R107, R135, and D223 each contribute to the substrate site. Mg(2+)-binding residues include D223, D246, and D250. Residue 280–292 (GSAPDIAGMNKAN) participates in NAD(+) binding.

This sequence belongs to the isocitrate and isopropylmalate dehydrogenases family. LeuB type 1 subfamily. Homodimer. Requires Mg(2+) as cofactor. Mn(2+) serves as cofactor.

The protein localises to the cytoplasm. It carries out the reaction (2R,3S)-3-isopropylmalate + NAD(+) = 4-methyl-2-oxopentanoate + CO2 + NADH. The protein operates within amino-acid biosynthesis; L-leucine biosynthesis; L-leucine from 3-methyl-2-oxobutanoate: step 3/4. In terms of biological role, catalyzes the oxidation of 3-carboxy-2-hydroxy-4-methylpentanoate (3-isopropylmalate) to 3-carboxy-4-methyl-2-oxopentanoate. The product decarboxylates to 4-methyl-2 oxopentanoate. This Bacillus caldotenax protein is 3-isopropylmalate dehydrogenase (leuB).